The primary structure comprises 305 residues: Oxygen-dependent coproporphyrinogen-III oxidase (305 aa).

Residue Ser99 coordinates substrate. 2 residues coordinate a divalent metal cation: His103 and His113. Catalysis depends on His113, which acts as the Proton donor. A substrate-binding site is contributed by 115–117; it reads NVR. The a divalent metal cation site is built by His152 and His182. The important for dimerization stretch occupies residues 247–282; it reads YVEFNLVLDRGTLFGLQTGGRTESILMSMPPLARWE. 265-267 contributes to the substrate binding site; it reads GGR.

This sequence belongs to the aerobic coproporphyrinogen-III oxidase family. As to quaternary structure, homodimer. Requires a divalent metal cation as cofactor.

The protein localises to the cytoplasm. It carries out the reaction coproporphyrinogen III + O2 + 2 H(+) = protoporphyrinogen IX + 2 CO2 + 2 H2O. The protein operates within porphyrin-containing compound metabolism; protoporphyrin-IX biosynthesis; protoporphyrinogen-IX from coproporphyrinogen-III (O2 route): step 1/1. Functionally, involved in the heme biosynthesis. Catalyzes the aerobic oxidative decarboxylation of propionate groups of rings A and B of coproporphyrinogen-III to yield the vinyl groups in protoporphyrinogen-IX. This chain is Oxygen-dependent coproporphyrinogen-III oxidase, found in Vibrio cholerae serotype O1 (strain M66-2).